A 214-amino-acid polypeptide reads, in one-letter code: Small ribosomal subunit protein uS3c (214 aa).

Residues 39-111 (IRTYLNKLAK…QLTINIIEVE (73 aa)) enclose the KH type-2 domain.

This sequence belongs to the universal ribosomal protein uS3 family. Part of the 30S ribosomal subunit.

It localises to the plastid. The protein resides in the chloroplast. The polypeptide is Small ribosomal subunit protein uS3c (rps3) (Trieres chinensis (Marine centric diatom)).